Reading from the N-terminus, the 197-residue chain is dITP/XTP pyrophosphatase (197 aa).

Residue 8–13 (TGNAGK) coordinates substrate. Glu-40 and Asp-69 together coordinate Mg(2+). The active-site Proton acceptor is the Asp-69. Residues Ser-70, 154–157 (FGYD), Lys-177, and 182–183 (HR) contribute to the substrate site.

It belongs to the HAM1 NTPase family. As to quaternary structure, homodimer. Requires Mg(2+) as cofactor.

The enzyme catalyses XTP + H2O = XMP + diphosphate + H(+). It carries out the reaction dITP + H2O = dIMP + diphosphate + H(+). The catalysed reaction is ITP + H2O = IMP + diphosphate + H(+). Its function is as follows. Pyrophosphatase that catalyzes the hydrolysis of nucleoside triphosphates to their monophosphate derivatives, with a high preference for the non-canonical purine nucleotides XTP (xanthosine triphosphate), dITP (deoxyinosine triphosphate) and ITP. Seems to function as a house-cleaning enzyme that removes non-canonical purine nucleotides from the nucleotide pool, thus preventing their incorporation into DNA/RNA and avoiding chromosomal lesions. The chain is dITP/XTP pyrophosphatase (rdgB) from Shigella flexneri.